The chain runs to 283 residues: Shikimate dehydrogenase (NADP(+)) (283 aa).

Shikimate-binding positions include 22 to 24 (SRS) and Thr69. Lys73 serves as the catalytic Proton acceptor. Asn93 and Asp108 together coordinate shikimate. NADP(+)-binding positions include 133–137 (GAGGS) and Leu222. Residue Tyr224 coordinates shikimate. Position 245 (Gly245) interacts with NADP(+).

Belongs to the shikimate dehydrogenase family. As to quaternary structure, homodimer.

The enzyme catalyses shikimate + NADP(+) = 3-dehydroshikimate + NADPH + H(+). Its pathway is metabolic intermediate biosynthesis; chorismate biosynthesis; chorismate from D-erythrose 4-phosphate and phosphoenolpyruvate: step 4/7. Functionally, involved in the biosynthesis of the chorismate, which leads to the biosynthesis of aromatic amino acids. Catalyzes the reversible NADPH linked reduction of 3-dehydroshikimate (DHSA) to yield shikimate (SA). In Rhodopseudomonas palustris (strain BisB5), this protein is Shikimate dehydrogenase (NADP(+)).